Consider the following 184-residue polypeptide: UPF0397 protein SAR2767 (184 aa).

Transmembrane regions (helical) follow at residues 11–31 (VVAI…VVIP), 44–64 (AFLA…TGLI), 77–97 (AWWS…WIGL), 117–137 (GQII…DILI), and 148–168 (QGVI…TILL).

Belongs to the UPF0397 family.

It localises to the cell membrane. The chain is UPF0397 protein SAR2767 from Staphylococcus aureus (strain MRSA252).